The sequence spans 246 residues: Deoxycytidylate 5-hydroxymethyltransferase (246 aa).

The active site involves cysteine 148.

This sequence belongs to the thymidylate synthase family.

It catalyses the reaction dCMP + (6R)-5,10-methylene-5,6,7,8-tetrahydrofolate + H2O = 5-hydroxymethyl-dCMP + (6S)-5,6,7,8-tetrahydrofolate. In Enterobacteria phage T4 (Bacteriophage T4), this protein is Deoxycytidylate 5-hydroxymethyltransferase (42).